The following is a 150-amino-acid chain: FAD synthase (150 aa).

Residues 11–12, 16–19, aspartate 96, and tyrosine 124 contribute to the ATP site; these read TF and HPGH.

The protein belongs to the archaeal FAD synthase family. Homodimer. Requires a divalent metal cation as cofactor.

It carries out the reaction FMN + ATP + H(+) = FAD + diphosphate. Its pathway is cofactor biosynthesis; FAD biosynthesis; FAD from FMN: step 1/1. In terms of biological role, catalyzes the transfer of the AMP portion of ATP to flavin mononucleotide (FMN) to produce flavin adenine dinucleotide (FAD) coenzyme. In Methanococcus maripaludis (strain DSM 14266 / JCM 13030 / NBRC 101832 / S2 / LL), this protein is FAD synthase.